The primary structure comprises 155 residues: Small ribosomal subunit protein uS7c (155 aa).

It belongs to the universal ribosomal protein uS7 family. In terms of assembly, part of the 30S ribosomal subunit.

Its subcellular location is the plastid. It localises to the chloroplast. Functionally, one of the primary rRNA binding proteins, it binds directly to 16S rRNA where it nucleates assembly of the head domain of the 30S subunit. The sequence is that of Small ribosomal subunit protein uS7c (rps7) from Cryptomeria japonica (Japanese cedar).